The chain runs to 221 residues: MALPNQQTVDYPSFKLVIVGDGGTGKTTFVKRHLTGEFEKKYEPTIGVEVHPLDFFTNCGKIRFYCWDTAGQEKFGGLRDGYYIHGQCAIIMFDVTARLTYKNVPTWHRDLCRVCENIPIVLCGNKVDVKNRQVKAKQVTFHRKKNLQYYEISAKSNYNFEKPFLYLARKLAGDANLHFVESPALAPPEVQIDLAAQQQHEAELAAAASQPLPDDDDDTFE.

Residues 10-174 (DYPSFKLVIV…LYLARKLAGD (165 aa)) form the Small GTPase Ran-type domain. 21–28 (DGGTGKTT) is a binding site for GTP. Positions 40-48 (KKYEPTIGV) are switch-I. Residues Gly71, 125-128 (NKVD), and 153-155 (SAK) contribute to the GTP site. Residues 71–87 (GQEKFGGLRDGYYIHGQ) are switch-II. The disordered stretch occupies residues 201–221 (EAELAAAASQPLPDDDDDTFE).

Belongs to the small GTPase superfamily. Ran family. As to quaternary structure, found in a nuclear export complex with RanGTP, exportin and pre-miRNA. Interacts with RanBP1a and RanBP1b. Interacts with KPNB1.

The protein localises to the nucleus. In terms of biological role, GTP-binding protein involved in nucleocytoplasmic transport. Required for the import of protein into the nucleus and also for RNA export. Involved in chromatin condensation and control of cell cycle. The chain is GTP-binding nuclear protein Ran-3 (RAN3) from Arabidopsis thaliana (Mouse-ear cress).